A 471-amino-acid polypeptide reads, in one-letter code: 6-phosphofructo-2-kinase/fructose-2,6-bisphosphatase 1 (471 aa).

N-acetylserine is present on Ser2. The 6-phosphofructo-2-kinase stretch occupies residues 2 to 250; the sequence is SREMGELTQT…AYYLMNIHVT (249 aa). Ser33 is subject to Phosphoserine; by PKA. ATP is bound at residue 49–57; the sequence is GLPARGKTY. Beta-D-fructose 6-phosphate contacts are provided by Arg82 and Arg105. Asp131 is an active-site residue. Beta-D-fructose 6-phosphate-binding residues include Thr133 and Arg139. Phosphoserine is present on Ser141. Cys161 is an active-site residue. 170–175 lines the ATP pocket; it reads NIKQVK. Beta-D-fructose 6-phosphate contacts are provided by Lys175, Arg196, and Tyr200. The segment at 251–471 is fructose-2,6-bisphosphatase; the sequence is PRSIYLCRHG…EALDTVPAHY (221 aa). Beta-D-fructose 2,6-bisphosphate is bound at residue Arg258. The active-site Tele-phosphohistidine intermediate is His259. Beta-D-fructose 2,6-bisphosphate is bound by residues Asn265, Gly271, and Arg308. The active-site Proton donor/acceptor is Glu328. Residues Tyr339, Arg353, Lys357, Tyr368, Gln394, and Arg398 each contribute to the beta-D-fructose 2,6-bisphosphate site. 350–353 is an ATP binding site; that stretch reads FALR. ATP contacts are provided by residues 394–398 and Tyr430; that span reads QAVMR.

In the C-terminal section; belongs to the phosphoglycerate mutase family. Homodimer. As to expression, liver.

It carries out the reaction beta-D-fructose 2,6-bisphosphate + H2O = beta-D-fructose 6-phosphate + phosphate. It catalyses the reaction beta-D-fructose 6-phosphate + ATP = beta-D-fructose 2,6-bisphosphate + ADP + H(+). With respect to regulation, phosphorylation at Ser-33 inhibits the kinase and activates the bisphosphatase. In terms of biological role, synthesis and degradation of fructose 2,6-bisphosphate. The chain is 6-phosphofructo-2-kinase/fructose-2,6-bisphosphatase 1 from Rattus norvegicus (Rat).